Consider the following 283-residue polypeptide: Undecaprenyl-diphosphatase (283 aa).

The next 7 membrane-spanning stretches (helical) occupy residues 40 to 60, 85 to 105, 113 to 133, 153 to 173, 193 to 213, 227 to 247, and 259 to 279; these read GAAF…IYFF, AKMG…GLLF, LRSL…LTIA, IGWK…IPGS, AARF…VFQL, LIAI…SIAF, and VFII…ATGM.

This sequence belongs to the UppP family.

Its subcellular location is the cell inner membrane. The enzyme catalyses di-trans,octa-cis-undecaprenyl diphosphate + H2O = di-trans,octa-cis-undecaprenyl phosphate + phosphate + H(+). Functionally, catalyzes the dephosphorylation of undecaprenyl diphosphate (UPP). Confers resistance to bacitracin. In Chlorobium limicola (strain DSM 245 / NBRC 103803 / 6330), this protein is Undecaprenyl-diphosphatase.